The sequence spans 458 residues: Aldehyde dehydrogenase (458 aa).

Residues 134 to 135 (WN), 158 to 161 (KHAS), and 210 to 211 (GS) each bind NADP(+). The Proton acceptor role is filled by glutamate 232. NADP(+) is bound at residue leucine 233. Cysteine 266 acts as the Nucleophile in catalysis. Glutamate 363 serves as a coordination point for NADP(+).

The protein belongs to the aldehyde dehydrogenase family. Monomer.

It carries out the reaction an aldehyde + NAD(+) + H2O = a carboxylate + NADH + 2 H(+). It catalyses the reaction an aldehyde + NADP(+) + H2O = a carboxylate + NADPH + 2 H(+). Its pathway is carbohydrate metabolism; D-xylose degradation. Aldehyde dehydrogenase able to oxidize various aldehydes such as formaldehyde, glyceraldehyde, butyraldehyde, glutaraldehyde and benzaldehyde (in vitro). Is likely involved in the oxidative D-xylose degradation pathway, catalyzing the oxidation step of 2-oxoglutarate semialdehyde to 2-oxoglutarate. Is able to use both NAD(+) and NADP(+); however, shows a preference for NADP(+). Does not display succinate semialdehyde dehydrogenase activity. This Paenarthrobacter nicotinovorans (Arthrobacter nicotinovorans) protein is Aldehyde dehydrogenase (aldh).